The following is a 275-amino-acid chain: Glutamate 5-kinase (275 aa).

Lys17 lines the ATP pocket. Substrate-binding residues include Ser57, Asp144, and Asn160. Residues 180 to 181 (SD) and 222 to 228 (TGGMLSK) each bind ATP.

This sequence belongs to the glutamate 5-kinase family.

It is found in the cytoplasm. It carries out the reaction L-glutamate + ATP = L-glutamyl 5-phosphate + ADP. The protein operates within amino-acid biosynthesis; L-proline biosynthesis; L-glutamate 5-semialdehyde from L-glutamate: step 1/2. Catalyzes the transfer of a phosphate group to glutamate to form L-glutamate 5-phosphate. This Streptococcus pyogenes serotype M12 (strain MGAS2096) protein is Glutamate 5-kinase.